The primary structure comprises 394 residues: Elongation factor Tu (394 aa).

The region spanning 10–204 (KPHVNIGTIG…AVDSYIPQPV (195 aa)) is the tr-type G domain. The tract at residues 19–26 (GHVDHGKT) is G1. A GTP-binding site is contributed by 19–26 (GHVDHGKT). Thr-26 serves as a coordination point for Mg(2+). The segment at 60-64 (GITIS) is G2. The interval 81 to 84 (DCPG) is G3. GTP contacts are provided by residues 81–85 (DCPGH) and 136–139 (NKVD). A G4 region spans residues 136-139 (NKVD). The tract at residues 174–176 (SAL) is G5.

Belongs to the TRAFAC class translation factor GTPase superfamily. Classic translation factor GTPase family. EF-Tu/EF-1A subfamily. Monomer.

Its subcellular location is the cytoplasm. The catalysed reaction is GTP + H2O = GDP + phosphate + H(+). In terms of biological role, GTP hydrolase that promotes the GTP-dependent binding of aminoacyl-tRNA to the A-site of ribosomes during protein biosynthesis. The polypeptide is Elongation factor Tu (Rickettsia helvetica).